Reading from the N-terminus, the 811-residue chain is Serine/threonine-protein kinase prpf4B (811 aa).

Disordered stretches follow at residues 1–257 (MVIE…TNEP), 288–341 (EKYN…NQIE), 353–379 (KDQNSENSSAFNDNNNDESCSSEEDLK), and 408–452 (VSIK…TNGG). Residues 46–71 (SSPASRETSSSKLMSPSKNQSSSSSR) are compositionally biased toward low complexity. Basic and acidic residues predominate over residues 81–202 (RRKDERYSSS…DNMDSRDNKN (122 aa)). Residues 203–215 (GSRQSINNNTLSY) are compositionally biased toward polar residues. Residues 217–240 (KQADRKDEVRVKDNISVNDDKTNH) are compositionally biased toward basic and acidic residues. Polar residues-rich tracts occupy residues 241-257 (GENLTNESITATSTNEP) and 293-302 (EQPQPITSSL). Positions 310 to 327 (SNTNTNSNSTPVATTTTS) are enriched in low complexity. The region spanning 490-808 (YQIFSPIGSG…PFEALNHEFL (319 aa)) is the Protein kinase domain. Residues 496–504 (IGSGVFSTV) and Lys519 each bind ATP. Asp619 functions as the Proton acceptor in the catalytic mechanism.

This sequence belongs to the protein kinase superfamily. CMGC Ser/Thr protein kinase family. Post-translationally, phosphorylated. Autophosphorylated; phosphorylation inhibits interaction with its targets.

The protein localises to the nucleus. It is found in the chromosome. The protein resides in the centromere. Its subcellular location is the kinetochore. It catalyses the reaction L-seryl-[protein] + ATP = O-phospho-L-seryl-[protein] + ADP + H(+). The enzyme catalyses L-threonyl-[protein] + ATP = O-phospho-L-threonyl-[protein] + ADP + H(+). Functionally, serine/threonine kinase involved in spliceosomal assembly as well as mitosis and signaling regulation. This is Serine/threonine-protein kinase prpf4B (prp4k) from Dictyostelium discoideum (Social amoeba).